The chain runs to 163 residues: NADH-quinone oxidoreductase subunit I (163 aa).

4Fe-4S ferredoxin-type domains lie at 53 to 83 (LRRY…IEAG) and 94 to 123 (VRYD…EGPN). Positions 63, 66, 69, 73, 103, 106, 109, and 113 each coordinate [4Fe-4S] cluster.

Belongs to the complex I 23 kDa subunit family. As to quaternary structure, NDH-1 is composed of 14 different subunits. Subunits NuoA, H, J, K, L, M, N constitute the membrane sector of the complex. [4Fe-4S] cluster is required as a cofactor.

The protein localises to the cell inner membrane. It catalyses the reaction a quinone + NADH + 5 H(+)(in) = a quinol + NAD(+) + 4 H(+)(out). Its function is as follows. NDH-1 shuttles electrons from NADH, via FMN and iron-sulfur (Fe-S) centers, to quinones in the respiratory chain. The immediate electron acceptor for the enzyme in this species is believed to be ubiquinone. Couples the redox reaction to proton translocation (for every two electrons transferred, four hydrogen ions are translocated across the cytoplasmic membrane), and thus conserves the redox energy in a proton gradient. This Bartonella quintana (strain Toulouse) (Rochalimaea quintana) protein is NADH-quinone oxidoreductase subunit I.